Reading from the N-terminus, the 317-residue chain is Melanocyte-stimulating hormone receptor (317 aa).

Residues 1 to 37 (MPVLGSQRRLLGSLNCTPPATLPLTLAPNRTGPQCLE) lie on the Extracellular side of the membrane. Residue Asn29 is glycosylated (N-linked (GlcNAc...) asparagine). A helical transmembrane segment spans residues 38-63 (VSIPDGLFLSLGLVSLVENVLVVAAI). Residues 64-72 (AKNRNLHSP) are Cytoplasmic-facing. Residues 73–93 (MYYFICCLAMSDLLVSVSNVL) traverse the membrane as a helical segment. Topologically, residues 94 to 118 (ETAVMLLLEAGVLATRAAVVQQLDN) are extracellular. The helical transmembrane segment at 119–140 (VIDVLICSSMVSSLCFLGAIAV) threads the bilayer. Residues 141–163 (DRYISIFYALRYHSVVTLPRAWR) are Cytoplasmic-facing. A helical transmembrane segment spans residues 164–183 (IIAAIWVASILTSVLSITYY). The Extracellular portion of the chain corresponds to 184 to 191 (NHTVVLLC). Residues 192-211 (LVGFFIAMLALMAVLYVHML) form a helical membrane-spanning segment. The Cytoplasmic portion of the chain corresponds to 212–240 (ARACQHARGIARLQKRQRPIHQGFGLKGA). A helical membrane pass occupies residues 241–266 (ATLTILLGVFFLCWGPFFLHLSLIVL). The Extracellular segment spans residues 267–279 (CPQHPTCGCIFKN). Residues 280 to 300 (FNLFLALIICNAIVDPLIYAF) traverse the membrane as a helical segment. Over 301 to 317 (RSQELRKTLQEVLQCSW) the chain is Cytoplasmic. Residue Cys315 is the site of S-palmitoyl cysteine attachment.

It belongs to the G-protein coupled receptor 1 family. As to quaternary structure, interacts with MGRN1, but does not undergo MGRN1-mediated ubiquitination; this interaction competes with GNAS-binding and thus inhibits agonist-induced cAMP production. Interacts with OPN3; the interaction results in a decrease in MC1R-mediated cAMP signaling and ultimately a decrease in melanin production in melanocytes.

It localises to the cell membrane. Its function is as follows. Receptor for MSH (alpha, beta and gamma) and ACTH. The activity of this receptor is mediated by G proteins which activate adenylate cyclase. Mediates melanogenesis, the production of eumelanin (black/brown) and phaeomelanin (red/yellow), via regulation of cAMP signaling in melanocytes. This is Melanocyte-stimulating hormone receptor (MC1R) from Ovis aries (Sheep).